The following is a 463-amino-acid chain: Rubisco accumulation factor 1, chloroplastic (463 aa).

Positions 1-18 are enriched in low complexity; the sequence is MLSLSHPHPHPAASTTAP. Residues 1-31 constitute a chloroplast transit peptide; the sequence is MLSLSHPHPHPAASTTAPRHQRTAPVWHRRR. A disordered region spans residues 1-84; the sequence is MLSLSHPHPH…PFHPPPSPLP (84 aa). The segment covering 19–33 has biased composition (basic residues); that stretch reads RHQRTAPVWHRRRAS. Residues 43-53 show a composition bias toward gly residues; the sequence is PGGGSTGGRGG. The N-terminal alpha-helix stretch occupies residues 83–275; the sequence is LPPSLRNLDL…SGRARVELEL (193 aa). A coiled-coil region spans residues 240–294; that stretch reads RQSREAIDVQDRVAELERALQVVETESGRARVELELERARRKAAGEEEVDEEGEE. The segment at 305 to 450 is C-terminal beta sheet; sequence VTVVRLRYGE…AEVVIVVRPP (146 aa).

The protein belongs to the RAF family. In terms of assembly, homotrimer. In terms of tissue distribution, expressed in bundle sheath.

Its subcellular location is the plastid. The protein resides in the chloroplast. Required for assembly or stability of RuBisCO. Acts at a postchaperonin step to fold and/or assemble the large subunit (LS) into RuBisCO. The polypeptide is Rubisco accumulation factor 1, chloroplastic (Zea mays (Maize)).